A 475-amino-acid chain; its full sequence is Putative aldehyde dehydrogenase (475 aa).

Residues 146–147 (WN) and 223–224 (GS) contribute to the NAD(+) site. Glu245 (proton acceptor) is an active-site residue. Leu246 provides a ligand contact to NAD(+). Cys279 functions as the Nucleophile in the catalytic mechanism. Position 379 (Glu379) interacts with NAD(+).

It belongs to the aldehyde dehydrogenase family.

The catalysed reaction is an aldehyde + NAD(+) + H2O = a carboxylate + NADH + 2 H(+). The sequence is that of Putative aldehyde dehydrogenase from Staphylococcus aureus (strain USA300).